Reading from the N-terminus, the 82-residue chain is Large ribosomal subunit protein bL31 (82 aa).

It belongs to the bacterial ribosomal protein bL31 family. Type A subfamily. Part of the 50S ribosomal subunit.

Binds the 23S rRNA. This Rippkaea orientalis (strain PCC 8801 / RF-1) (Cyanothece sp. (strain PCC 8801)) protein is Large ribosomal subunit protein bL31.